We begin with the raw amino-acid sequence, 173 residues long: Acireductone dioxygenase (173 aa).

Positions 1 to 20 are disordered; that stretch reads MKVYEYDNSTEDQREDHDSG. Fe(2+)-binding residues include His81, His83, Glu87, and His126. Residues His81, His83, Glu87, and His126 each coordinate Ni(2+).

It belongs to the acireductone dioxygenase (ARD) family. Fe(2+) is required as a cofactor. It depends on Ni(2+) as a cofactor.

The protein resides in the cytoplasm. It is found in the nucleus. It carries out the reaction 1,2-dihydroxy-5-(methylsulfanyl)pent-1-en-3-one + O2 = 4-methylsulfanyl-2-oxobutanoate + formate + 2 H(+). The catalysed reaction is 1,2-dihydroxy-5-(methylsulfanyl)pent-1-en-3-one + O2 = 3-(methylsulfanyl)propanoate + CO + formate + 2 H(+). It functions in the pathway amino-acid biosynthesis; L-methionine biosynthesis via salvage pathway; L-methionine from S-methyl-5-thio-alpha-D-ribose 1-phosphate: step 5/6. Its function is as follows. Catalyzes 2 different reactions between oxygen and the acireductone 1,2-dihydroxy-3-keto-5-methylthiopentene (DHK-MTPene) depending upon the metal bound in the active site. Fe-containing acireductone dioxygenase (Fe-ARD) produces formate and 2-keto-4-methylthiobutyrate (KMTB), the alpha-ketoacid precursor of methionine in the methionine recycle pathway. Ni-containing acireductone dioxygenase (Ni-ARD) produces methylthiopropionate, carbon monoxide and formate, and does not lie on the methionine recycle pathway. In Tuber melanosporum (strain Mel28) (Perigord black truffle), this protein is Acireductone dioxygenase.